A 114-amino-acid chain; its full sequence is Small ribosomal subunit protein uS17 (114 aa).

It belongs to the universal ribosomal protein uS17 family. As to quaternary structure, part of the 30S ribosomal subunit.

In terms of biological role, one of the primary rRNA binding proteins, it binds specifically to the 5'-end of 16S ribosomal RNA. The sequence is that of Small ribosomal subunit protein uS17 from Saccharolobus solfataricus (strain ATCC 35092 / DSM 1617 / JCM 11322 / P2) (Sulfolobus solfataricus).